The chain runs to 216 residues: Probable GTP-binding protein EngB (216 aa).

Residues 23–197 form the EngB-type G domain; it reads EGAEIAFAGR…EHKVAGWLGL (175 aa). Residues 31–38, 58–62, 76–79, 143–146, and 176–178 each bind GTP; these read GRSNAGKS, GRTQL, DLPG, TKCD, and FSS. Positions 38 and 60 each coordinate Mg(2+).

It belongs to the TRAFAC class TrmE-Era-EngA-EngB-Septin-like GTPase superfamily. EngB GTPase family. The cofactor is Mg(2+).

Necessary for normal cell division and for the maintenance of normal septation. The protein is Probable GTP-binding protein EngB of Aromatoleum aromaticum (strain DSM 19018 / LMG 30748 / EbN1) (Azoarcus sp. (strain EbN1)).